Reading from the N-terminus, the 57-residue chain is U13-myrmicitoxin-Mri1a (57 aa).

Positions 1-23 (MKIIHVLLLVAVVAITMSPSIMA) are cleaved as a signal peptide. The propeptide occupies 24–29 (ESVAEA). E56 carries the post-translational modification Glutamic acid 1-amide.

In terms of tissue distribution, expressed by the venom gland.

The protein localises to the secreted. Functionally, induces paralysis 1 hour after injection into insects (blowfly L.caesar) but does not appear to be lethal. The polypeptide is U13-myrmicitoxin-Mri1a (Manica rubida (European giant red ant)).